We begin with the raw amino-acid sequence, 145 residues long: uncharacterized protein (145 aa).

This is an uncharacterized protein from Rhizobium radiobacter (Agrobacterium tumefaciens).